Here is a 426-residue protein sequence, read N- to C-terminus: Histidine--tRNA ligase (426 aa).

The protein belongs to the class-II aminoacyl-tRNA synthetase family. In terms of assembly, homodimer.

The protein localises to the cytoplasm. It carries out the reaction tRNA(His) + L-histidine + ATP = L-histidyl-tRNA(His) + AMP + diphosphate + H(+). The chain is Histidine--tRNA ligase from Legionella pneumophila subsp. pneumophila (strain Philadelphia 1 / ATCC 33152 / DSM 7513).